The chain runs to 350 residues: Biotin synthase (350 aa).

The Radical SAM core domain occupies 54-278; that stretch reads REIQLSTLLS…TMPQSYVRLS (225 aa). [4Fe-4S] cluster-binding residues include Cys69, Cys73, and Cys76. The [2Fe-2S] cluster site is built by Cys113, Cys144, Cys204, and Arg276.

Belongs to the radical SAM superfamily. Biotin synthase family. As to quaternary structure, homodimer. [4Fe-4S] cluster is required as a cofactor. It depends on [2Fe-2S] cluster as a cofactor.

It carries out the reaction (4R,5S)-dethiobiotin + (sulfur carrier)-SH + 2 reduced [2Fe-2S]-[ferredoxin] + 2 S-adenosyl-L-methionine = (sulfur carrier)-H + biotin + 2 5'-deoxyadenosine + 2 L-methionine + 2 oxidized [2Fe-2S]-[ferredoxin]. Its pathway is cofactor biosynthesis; biotin biosynthesis; biotin from 7,8-diaminononanoate: step 2/2. In terms of biological role, catalyzes the conversion of dethiobiotin (DTB) to biotin by the insertion of a sulfur atom into dethiobiotin via a radical-based mechanism. The protein is Biotin synthase of Neisseria meningitidis serogroup A / serotype 4A (strain DSM 15465 / Z2491).